Here is a 47-residue protein sequence, read N- to C-terminus: Zinc-finger protein TK0143 (47 aa).

The C2H2-type zinc finger occupies 18-41; it reads FRCPRCGMVFRSAKAYTRHVNKAH. Zn(2+) contacts are provided by C20, C23, H36, and H41.

In terms of assembly, crystallized in association with 70S ribosomes. Zn(2+) serves as cofactor.

This Thermococcus kodakarensis (strain ATCC BAA-918 / JCM 12380 / KOD1) (Pyrococcus kodakaraensis (strain KOD1)) protein is Zinc-finger protein TK0143.